The sequence spans 353 residues: Protein Wnt-11b (353 aa).

A signal peptide spans 1-22 (MAPTRHWVTPLLLLCCSGICGA). N-linked (GlcNAc...) asparagine glycosylation is found at Asn31, Asn38, and Asn88. Cystine bridges form between Cys78/Cys89, Cys128/Cys136, Cys138/Cys155, Cys208/Cys222, and Cys210/Cys217. Residue Ser214 is the site of O-palmitoleoyl serine; by PORCN attachment. Tyr274 and Tyr281 each carry sulfotyrosine. Cystine bridges form between Cys282-Cys313, Cys298-Cys308, Cys312-Cys352, Cys328-Cys343, Cys330-Cys340, and Cys335-Cys336. N-linked (GlcNAc...) asparagine glycosylation is present at Asn299.

Belongs to the Wnt family. Homodimer. Secreted homodimers form a complex with wnt5a homodimers; tyrosine sulfation of both wnt11 and wnt5a by tpst1 is required for this interaction. Interacts with the transmembrane receptor fzd7/fz7. Interacts with lrp6 and ryk. Interacts with tdgf1/frl1. Interacts weakly with frzb1 and strongly with frzb2/crescent. Interaction with frzb2/crescent antagonizes wnt11 function in the neuroectoderm, but enhances it in mesodermal tissue. Post-translationally, glycosylation is required for protein secretion. Palmitoleoylation is required for efficient binding to frizzled receptors. Depalmitoleoylation leads to Wnt signaling pathway inhibition. As to expression, transcripts are expressed ubiquitously in early oocytes but become vegetally localized during mid-oogenesis then enriched on the dorsal side by the 8 to 16 cell stage. The protein becomes asymmetrically concentrated on the dorsal side by the 64-cell stage. During gastrulation, expressed in the lateral and ventral marginal zone, and during tadpole stages in the somites and first branchial arch. Weakly expressed in the pronephros from at least stage 12.5, with kidney expression increasing until stage 35. Expressed in the prospective posterior gut between stages 13 and 20, and in the deep foregut endoderm. Prior to neural crest cell migration, expressed in a domain flanking the neural crest on the lateral or epidermal side (the opposite side to wnt11/wnt11-r).

The protein localises to the secreted. It localises to the extracellular space. Its subcellular location is the extracellular matrix. Its function is as follows. Ligand for the frizzled7 transmembrane receptor. Primarily acts via non-canonical Wnt pathways mediated by either Ca(2+) and PKC, or by JNK and dvl2/dsh. Depending on the cellular context, can also signal via the canonical Wnt pathway mediated by beta-catenin and dvl2/dsh. May also inhibit canonical Wnt signaling. Maternally initiates dorsal/ventral axis formation by a canonical route, which signals via lrp6. In a complex with wnt5a, activates the canonical and non-canonical processes involved in axis formation. In the non-canonical pathway, acts through fzd7/fz7 to induce phosphorylation of dvl2/dsh. Signals through a non-canonical Wnt pathway to regulate convergent extension movements during gastrulation. Interactions with the secreted Wnt antagonist sfrp5 to coordinate foregut development, acting via a non-canonical Wnt pathway whereby sfrp5 restricts wnt11b activity to prevent inappropriate foregut formation. Mediates cardiogenesis via non-canonical Wnt signaling involving JNK-activation and PKC. Acts redundantly with wnt11/wnt11r during pronephros induction. The protein is Protein Wnt-11b (wnt11b) of Xenopus laevis (African clawed frog).